The chain runs to 350 residues: NADH-quinone oxidoreductase subunit H (350 aa).

The next 8 helical transmembrane spans lie at 31–51 (LMLL…LFLI), 102–122 (LLAP…IPFG), 132–152 (LGVL…WMAG), 171–191 (MLSY…MAGS), 205–225 (WFIF…NAEF), 263–283 (FMIG…APFG), 286–306 (FIPS…LYMW), and 322–342 (FAWK…GFGL).

It belongs to the complex I subunit 1 family. In terms of assembly, NDH-1 is composed of 14 different subunits. Subunits NuoA, H, J, K, L, M, N constitute the membrane sector of the complex.

The protein localises to the cell membrane. The enzyme catalyses a quinone + NADH + 5 H(+)(in) = a quinol + NAD(+) + 4 H(+)(out). NDH-1 shuttles electrons from NADH, via FMN and iron-sulfur (Fe-S) centers, to quinones in the respiratory chain. The immediate electron acceptor for the enzyme in this species is believed to be ubiquinone. Couples the redox reaction to proton translocation (for every two electrons transferred, four hydrogen ions are translocated across the cytoplasmic membrane), and thus conserves the redox energy in a proton gradient. This subunit may bind ubiquinone. This is NADH-quinone oxidoreductase subunit H from Carboxydothermus hydrogenoformans (strain ATCC BAA-161 / DSM 6008 / Z-2901).